The sequence spans 416 residues: Gamma-glutamyl phosphate reductase (416 aa).

It belongs to the gamma-glutamyl phosphate reductase family.

The protein resides in the cytoplasm. The catalysed reaction is L-glutamate 5-semialdehyde + phosphate + NADP(+) = L-glutamyl 5-phosphate + NADPH + H(+). It participates in amino-acid biosynthesis; L-proline biosynthesis; L-glutamate 5-semialdehyde from L-glutamate: step 2/2. Catalyzes the NADPH-dependent reduction of L-glutamate 5-phosphate into L-glutamate 5-semialdehyde and phosphate. The product spontaneously undergoes cyclization to form 1-pyrroline-5-carboxylate. In Salmonella arizonae (strain ATCC BAA-731 / CDC346-86 / RSK2980), this protein is Gamma-glutamyl phosphate reductase.